A 333-amino-acid polypeptide reads, in one-letter code: EP300-interacting inhibitor of differentiation 3 (333 aa).

Belongs to the NSE4 family. Component of the SMC5-SMC6 complex which consists at least of SMC5, SMC6, NSMCE2, NSMCE1, NSMCE4A or EID3 and NSMCE3; EID3 seems to be a testis-specific subunit. NSMCE1, NSMCE4A or EID3 and NSMCE3 probably form a subcomplex that bridges the head domains of the SMC5:SMC6 heterodimer. Homodimer, and heterodimer with EID2. Interacts with the C-terminal region of CREBBP. As to expression, highly expressed in testis.

The protein localises to the nucleus. It is found in the cytoplasm. The protein resides in the chromosome. Its subcellular location is the telomere. Its function is as follows. Tissue-specific component of the SMC5-SMC6 complex, a complex involved in repair of DNA double-strand breaks by homologous recombination. The complex may promote sister chromatid homologous recombination by recruiting the SMC1-SMC3 cohesin complex to double-strand breaks. The complex is required for telomere maintenance via recombination and mediates sumoylation of shelterin complex (telosome) components. Acts as a repressor of nuclear receptor-dependent transcription possibly by interfering with CREBBP-dependent coactivation. May function as a coinhibitor of other CREBBP/EP300-dependent transcription factors. This is EP300-interacting inhibitor of differentiation 3 from Homo sapiens (Human).